The chain runs to 428 residues: Adenylosuccinate synthetase (428 aa).

Residues Gly-12–Lys-18 and Gly-40–Ser-42 each bind GTP. Asp-13 functions as the Proton acceptor in the catalytic mechanism. The Mg(2+) site is built by Asp-13 and Gly-40. IMP-binding positions include Asp-13 to Lys-16, Asn-38 to His-41, Thr-128, Arg-142, Gln-223, Thr-238, and Arg-302. Catalysis depends on His-41, which acts as the Proton donor. Residue Val-298–Arg-304 coordinates substrate. GTP is bound by residues Arg-304, Lys-330–Asp-332, and Gly-412–Gly-414.

This sequence belongs to the adenylosuccinate synthetase family. Homodimer. It depends on Mg(2+) as a cofactor.

Its subcellular location is the cytoplasm. It catalyses the reaction IMP + L-aspartate + GTP = N(6)-(1,2-dicarboxyethyl)-AMP + GDP + phosphate + 2 H(+). The protein operates within purine metabolism; AMP biosynthesis via de novo pathway; AMP from IMP: step 1/2. Functionally, plays an important role in the de novo pathway of purine nucleotide biosynthesis. Catalyzes the first committed step in the biosynthesis of AMP from IMP. In Bifidobacterium longum subsp. infantis (strain ATCC 15697 / DSM 20088 / JCM 1222 / NCTC 11817 / S12), this protein is Adenylosuccinate synthetase.